We begin with the raw amino-acid sequence, 312 residues long: Ribosomal RNA small subunit methyltransferase H (312 aa).

S-adenosyl-L-methionine-binding positions include 35–37 (GGH), aspartate 55, phenylalanine 79, aspartate 101, and glutamine 108. The disordered stretch occupies residues 286-306 (LKPSEHEVNENSRSRSSVLRV). Positions 287 to 298 (KPSEHEVNENSR) are enriched in basic and acidic residues.

This sequence belongs to the methyltransferase superfamily. RsmH family.

Its subcellular location is the cytoplasm. The catalysed reaction is cytidine(1402) in 16S rRNA + S-adenosyl-L-methionine = N(4)-methylcytidine(1402) in 16S rRNA + S-adenosyl-L-homocysteine + H(+). In terms of biological role, specifically methylates the N4 position of cytidine in position 1402 (C1402) of 16S rRNA. In Aeromonas hydrophila subsp. hydrophila (strain ATCC 7966 / DSM 30187 / BCRC 13018 / CCUG 14551 / JCM 1027 / KCTC 2358 / NCIMB 9240 / NCTC 8049), this protein is Ribosomal RNA small subunit methyltransferase H.